A 329-amino-acid chain; its full sequence is Delta-aminolevulinic acid dehydratase (329 aa).

Catalysis depends on Lys202, which acts as the Schiff-base intermediate with substrate. Arg212 and Arg223 together coordinate 5-aminolevulinate. Residue Glu239 participates in Mg(2+) binding. Lys254 (schiff-base intermediate with substrate) is an active-site residue. Residues Ser280 and Tyr319 each contribute to the 5-aminolevulinate site.

It belongs to the ALAD family. Homooctamer.

The enzyme catalyses 2 5-aminolevulinate = porphobilinogen + 2 H2O + H(+). It participates in porphyrin-containing compound metabolism; protoporphyrin-IX biosynthesis; coproporphyrinogen-III from 5-aminolevulinate: step 1/4. Functionally, catalyzes an early step in the biosynthesis of tetrapyrroles. Binds two molecules of 5-aminolevulinate per subunit, each at a distinct site, and catalyzes their condensation to form porphobilinogen. In Mycobacterium tuberculosis (strain CDC 1551 / Oshkosh), this protein is Delta-aminolevulinic acid dehydratase (hemB).